We begin with the raw amino-acid sequence, 475 residues long: Polyphosphate:AMP phosphotransferase (475 aa).

PPK2 stretches follow at residues 18–222 (LDLI…LTAL) and 256–472 (ANYK…KADR).

It belongs to the polyphosphate kinase 2 (PPK2) family. Class II subfamily. Homodimer and homotetramer. Mg(2+) serves as cofactor.

The catalysed reaction is [phosphate](n) + ADP = [phosphate](n+1) + AMP. Functionally, uses inorganic polyphosphate (polyP) as a donor to convert AMP to ADP. Can also use GMP, UMP, CMP, TMP or deoxyribonucleoside monophosphates, with lower efficiency. Cannot use low-molecular weight polyP as donors. Can also catalyze the synthesis of polyP from ADP or GDP, with lower efficiency. This is Polyphosphate:AMP phosphotransferase from Acinetobacter johnsonii.